A 40-amino-acid polypeptide reads, in one-letter code: U2-ctenitoxin-Pr1a (40 aa).

4 cysteine pairs are disulfide-bonded: Cys2/Cys17, Cys9/Cys22, Cys16/Cys32, and Cys24/Cys30.

As to expression, expressed by the venom gland.

It is found in the secreted. Neurotoxin. This is U2-ctenitoxin-Pr1a from Phoneutria reidyi (Brazilian Amazonian armed spider).